A 498-amino-acid chain; its full sequence is ATP synthase subunit beta, chloroplastic (498 aa).

G172–T179 lines the ATP pocket.

Belongs to the ATPase alpha/beta chains family. In terms of assembly, F-type ATPases have 2 components, CF(1) - the catalytic core - and CF(0) - the membrane proton channel. CF(1) has five subunits: alpha(3), beta(3), gamma(1), delta(1), epsilon(1). CF(0) has four main subunits: a(1), b(1), b'(1) and c(9-12).

It localises to the plastid. Its subcellular location is the chloroplast thylakoid membrane. It carries out the reaction ATP + H2O + 4 H(+)(in) = ADP + phosphate + 5 H(+)(out). Its function is as follows. Produces ATP from ADP in the presence of a proton gradient across the membrane. The catalytic sites are hosted primarily by the beta subunits. The protein is ATP synthase subunit beta, chloroplastic of Carica papaya (Papaya).